Reading from the N-terminus, the 204-residue chain is ADP-ribosylation factor-like protein 15 (204 aa).

GTP is bound by residues 39 to 46 (GLTGSGKT), 82 to 86 (ELGGA), and 142 to 145 (NHQD).

Belongs to the small GTPase superfamily. Arf family.

The protein is ADP-ribosylation factor-like protein 15 (ARL15) of Homo sapiens (Human).